The following is a 299-amino-acid chain: Pyridoxal 5'-phosphate synthase subunit PdxS (299 aa).

D29 is a D-ribose 5-phosphate binding site. The active-site Schiff-base intermediate with D-ribose 5-phosphate is the K86. G158 is a binding site for D-ribose 5-phosphate. Residue R170 coordinates D-glyceraldehyde 3-phosphate. D-ribose 5-phosphate is bound by residues G219 and G240–S241.

Belongs to the PdxS/SNZ family. In terms of assembly, in the presence of PdxT, forms a dodecamer of heterodimers.

It catalyses the reaction aldehydo-D-ribose 5-phosphate + D-glyceraldehyde 3-phosphate + L-glutamine = pyridoxal 5'-phosphate + L-glutamate + phosphate + 3 H2O + H(+). Its pathway is cofactor biosynthesis; pyridoxal 5'-phosphate biosynthesis. Its function is as follows. Catalyzes the formation of pyridoxal 5'-phosphate from ribose 5-phosphate (RBP), glyceraldehyde 3-phosphate (G3P) and ammonia. The ammonia is provided by the PdxT subunit. Can also use ribulose 5-phosphate and dihydroxyacetone phosphate as substrates, resulting from enzyme-catalyzed isomerization of RBP and G3P, respectively. This Protochlamydia amoebophila (strain UWE25) protein is Pyridoxal 5'-phosphate synthase subunit PdxS.